The sequence spans 58 residues: Conotoxin Leo-T2 (58 aa).

The signal sequence occupies residues 1 to 22 (MRCLPVFIILPLLIPSAPSVDA). Positions 23–47 (QPMTEDDVPLASFHEQTLQELWNKR) are excised as a propeptide.

It belongs to the conotoxin T superfamily. Post-translationally, contains 2 disulfide bonds that can be either 'C1-C3, C2-C4' or 'C1-C4, C2-C3', since these disulfide connectivities have been observed for conotoxins with cysteine framework V (for examples, see AC P0DQQ7 and AC P81755). In terms of tissue distribution, expressed by the venom duct.

It is found in the secreted. In Conus leopardus (Leopard cone), this protein is Conotoxin Leo-T2.